A 428-amino-acid chain; its full sequence is Glutamate-1-semialdehyde 2,1-aminomutase 1 (428 aa).

An N6-(pyridoxal phosphate)lysine modification is found at Lys267.

This sequence belongs to the class-III pyridoxal-phosphate-dependent aminotransferase family. HemL subfamily. In terms of assembly, homodimer. It depends on pyridoxal 5'-phosphate as a cofactor.

The protein localises to the cytoplasm. It carries out the reaction (S)-4-amino-5-oxopentanoate = 5-aminolevulinate. It participates in porphyrin-containing compound metabolism; protoporphyrin-IX biosynthesis; 5-aminolevulinate from L-glutamyl-tRNA(Glu): step 2/2. In Staphylococcus aureus (strain Mu3 / ATCC 700698), this protein is Glutamate-1-semialdehyde 2,1-aminomutase 1.